We begin with the raw amino-acid sequence, 203 residues long: Inosine triphosphate pyrophosphatase (203 aa).

10-15 (TGNQNK) contacts ITP. E40 lines the Mg(2+) pocket. ITP contacts are provided by residues K52, 68–69 (DT), K85, 145–148 (FGWD), K168, and 173–174 (HR).

This sequence belongs to the HAM1 NTPase family. Homodimer. Mg(2+) is required as a cofactor. The cofactor is Mn(2+).

It localises to the cytoplasm. It carries out the reaction ITP + H2O = IMP + diphosphate + H(+). The catalysed reaction is dITP + H2O = dIMP + diphosphate + H(+). It catalyses the reaction XTP + H2O = XMP + diphosphate + H(+). Functionally, pyrophosphatase that hydrolyzes non-canonical purine nucleotides such as inosine triphosphate (ITP), deoxyinosine triphosphate (dITP) or xanthosine 5'-triphosphate (XTP) to their respective monophosphate derivatives. The enzyme does not distinguish between the deoxy- and ribose forms. Probably excludes non-canonical purines from RNA and DNA precursor pools, thus preventing their incorporation into RNA and DNA and avoiding chromosomal lesions. The sequence is that of Inosine triphosphate pyrophosphatase from Nematostella vectensis (Starlet sea anemone).